A 179-amino-acid polypeptide reads, in one-letter code: Hypoxanthine-guanine phosphoribosyltransferase (179 aa).

K42 and G43 together coordinate diphosphate. Residues E98 and D99 each coordinate Mg(2+). Residue E102 is the Proton acceptor of the active site. Residues K130, 151-152 (FV), and D158 contribute to the GMP site. R164 is a diphosphate binding site.

It belongs to the purine/pyrimidine phosphoribosyltransferase family. Mg(2+) is required as a cofactor.

The protein resides in the cytoplasm. The enzyme catalyses IMP + diphosphate = hypoxanthine + 5-phospho-alpha-D-ribose 1-diphosphate. The catalysed reaction is GMP + diphosphate = guanine + 5-phospho-alpha-D-ribose 1-diphosphate. It participates in purine metabolism; IMP biosynthesis via salvage pathway; IMP from hypoxanthine: step 1/1. The protein operates within purine metabolism; GMP biosynthesis via salvage pathway; GMP from guanine: step 1/1. Purine salvage pathway enzyme that catalyzes the transfer of the ribosyl-5-phosphate group from 5-phospho-alpha-D-ribose 1-diphosphate (PRPP) to the N9 position of the 6-oxopurines hypoxanthine and guanine to form the corresponding ribonucleotides IMP (inosine 5'-monophosphate) and GMP (guanosine 5'-monophosphate), with the release of PPi. This is Hypoxanthine-guanine phosphoribosyltransferase (hpt) from Staphylococcus aureus (strain COL).